The sequence spans 593 residues: Aspartate--tRNA ligase (593 aa).

Glu173 serves as a coordination point for L-aspartate. Residues 197 to 200 (QLFK) form an aspartate region. Residue Arg219 participates in L-aspartate binding. ATP is bound by residues 219–221 (RDE) and Gln228. An L-aspartate-binding site is contributed by His448. Residue Glu482 coordinates ATP. Arg489 is an L-aspartate binding site. 534-537 (GLDR) is an ATP binding site.

Belongs to the class-II aminoacyl-tRNA synthetase family. Type 1 subfamily. Homodimer.

Its subcellular location is the cytoplasm. The enzyme catalyses tRNA(Asp) + L-aspartate + ATP = L-aspartyl-tRNA(Asp) + AMP + diphosphate. Functionally, catalyzes the attachment of L-aspartate to tRNA(Asp) in a two-step reaction: L-aspartate is first activated by ATP to form Asp-AMP and then transferred to the acceptor end of tRNA(Asp). In Shewanella denitrificans (strain OS217 / ATCC BAA-1090 / DSM 15013), this protein is Aspartate--tRNA ligase.